Consider the following 85-residue polypeptide: Large ribosomal subunit protein bL27 (85 aa).

The disordered stretch occupies residues 1 to 21 (MAHKKGVGSSRNGRDSDGQRL).

This sequence belongs to the bacterial ribosomal protein bL27 family.

This is Large ribosomal subunit protein bL27 from Geobacter sp. (strain M21).